A 99-amino-acid polypeptide reads, in one-letter code: NADH-quinone oxidoreductase subunit K (99 aa).

The next 3 helical transmembrane spans lie at 3 to 23 (PANY…GVLV), 28 to 48 (IVVF…LVTF), and 59 to 79 (VMAF…LAII).

The protein belongs to the complex I subunit 4L family. As to quaternary structure, NDH-1 is composed of 14 different subunits. Subunits NuoA, H, J, K, L, M, N constitute the membrane sector of the complex.

The protein localises to the cell membrane. The enzyme catalyses a quinone + NADH + 5 H(+)(in) = a quinol + NAD(+) + 4 H(+)(out). Its function is as follows. NDH-1 shuttles electrons from NADH, via FMN and iron-sulfur (Fe-S) centers, to quinones in the respiratory chain. The immediate electron acceptor for the enzyme in this species is believed to be a menaquinone. Couples the redox reaction to proton translocation (for every two electrons transferred, four hydrogen ions are translocated across the cytoplasmic membrane), and thus conserves the redox energy in a proton gradient. The protein is NADH-quinone oxidoreductase subunit K of Frankia alni (strain DSM 45986 / CECT 9034 / ACN14a).